Reading from the N-terminus, the 85-residue chain is Beta-insect depressant toxin Lqh-dprIT3g (85 aa).

The signal sequence occupies residues M1–A21. Residues D22–G82 form the LCN-type CS-alpha/beta domain. Disulfide bonds link C31/C81, C35/C56, C42/C63, and C46/C65. A Glycine amide modification is found at G82.

The protein belongs to the long (4 C-C) scorpion toxin superfamily. Sodium channel inhibitor family. Beta subfamily. As to expression, expressed by the venom gland.

Its subcellular location is the secreted. Its function is as follows. Depressant insect beta-toxins cause a transient contraction paralysis followed by a slow flaccid paralysis. They bind voltage-independently at site-4 of sodium channels (Nav) and block action potentials, primarily by depolarizing the axonal membrane and suppressing the sodium current. This depressant toxin is active only on insects. It is found in a relatively small amount in the venom. The protein is Beta-insect depressant toxin Lqh-dprIT3g of Leiurus hebraeus (Hebrew deathstalker scorpion).